The chain runs to 80 residues: SPbeta prophage-derived uncharacterized HTH-type transcriptional regulator YotL (80 aa).

Residues 12 to 67 enclose the HTH cro/C1-type domain; that stretch reads LNELMHEYSVSIEDLVECTGLSKQRINDYVGGFKSNMNIGTAMTFADAIGCSIEEL. A DNA-binding region (H-T-H motif) is located at residues 23–42; the sequence is IEDLVECTGLSKQRINDYVG.

The polypeptide is SPbeta prophage-derived uncharacterized HTH-type transcriptional regulator YotL (yotL) (Bacillus subtilis (strain 168)).